Here is a 129-residue protein sequence, read N- to C-terminus: NADPH-dependent 7-cyano-7-deazaguanine reductase (129 aa).

Catalysis depends on Cys42, which acts as the Thioimide intermediate. Residue Asp49 is the Proton donor of the active site. Residues 64–66 (VEL) and 83–84 (HE) contribute to the substrate site.

It belongs to the GTP cyclohydrolase I family. QueF type 1 subfamily.

Its subcellular location is the cytoplasm. It carries out the reaction 7-aminomethyl-7-carbaguanine + 2 NADP(+) = 7-cyano-7-deazaguanine + 2 NADPH + 3 H(+). The protein operates within tRNA modification; tRNA-queuosine biosynthesis. In terms of biological role, catalyzes the NADPH-dependent reduction of 7-cyano-7-deazaguanine (preQ0) to 7-aminomethyl-7-deazaguanine (preQ1). This Synechococcus sp. (strain CC9605) protein is NADPH-dependent 7-cyano-7-deazaguanine reductase.